Consider the following 429-residue polypeptide: Histidine--tRNA ligase (429 aa).

The protein belongs to the class-II aminoacyl-tRNA synthetase family. In terms of assembly, homodimer.

It localises to the cytoplasm. The catalysed reaction is tRNA(His) + L-histidine + ATP = L-histidyl-tRNA(His) + AMP + diphosphate + H(+). The chain is Histidine--tRNA ligase from Pseudomonas syringae pv. syringae (strain B728a).